The chain runs to 151 residues: Transcriptional regulator MraZ (151 aa).

2 SpoVT-AbrB domains span residues 5–52 and 81–124; these read ANAI…PLSE and AVDL…DEDA.

The protein belongs to the MraZ family. In terms of assembly, forms oligomers.

It is found in the cytoplasm. It localises to the nucleoid. The chain is Transcriptional regulator MraZ from Pseudomonas syringae pv. syringae (strain B728a).